Consider the following 423-residue polypeptide: Serine/threonine-protein kinase ppk25 (423 aa).

Phosphoserine is present on residues Ser-36 and Ser-38. Residues 53–305 (WIIKKTIGAG…LEQAAKFPWL (253 aa)) enclose the Protein kinase domain. Residues 59–67 (IGAGSMGKV) and Lys-82 each bind ATP. The active-site Proton acceptor is the Asp-175.

The protein belongs to the protein kinase superfamily. Ser/Thr protein kinase family.

Its subcellular location is the cytoplasm. It carries out the reaction L-seryl-[protein] + ATP = O-phospho-L-seryl-[protein] + ADP + H(+). The catalysed reaction is L-threonyl-[protein] + ATP = O-phospho-L-threonyl-[protein] + ADP + H(+). The protein is Serine/threonine-protein kinase ppk25 (ppk25) of Schizosaccharomyces pombe (strain 972 / ATCC 24843) (Fission yeast).